We begin with the raw amino-acid sequence, 606 residues long: Polypeptide N-acetylgalactosaminyltransferase 9 (606 aa).

The Cytoplasmic segment spans residues 1–6 (MAVARK). The chain crosses the membrane as a helical; Signal-anchor for type II membrane protein span at residues 7-29 (IRTLLTVNILVFVGIVLFSVYCR). Over 30-606 (LQGRSQELVR…IRNWIKHARH (577 aa)) the chain is Lumenal. Residues 43-62 (GGCRPRPATPAPGSPLRSGG) are disordered. 2 disulfide bridges follow: Cys-144–Cys-375 and Cys-366–Cys-445. The catalytic subdomain A stretch occupies residues 153-264 (LPQVSVVFIF…TGWAEPALSR (112 aa)). 2 residues coordinate substrate: Asp-194 and Arg-225. Positions 248, 250, and 380 each coordinate Mn(2+). The interval 321–383 (PIRTPAMIGC…PCSRVAHIER (63 aa)) is catalytic subdomain B. Positions 383 and 388 each coordinate substrate. The N-linked (GlcNAc...) asparagine glycan is linked to Asn-463. A Ricin B-type lectin domain is found at 467–603 (TYGEVRNSKA…KWMIRNWIKH (137 aa)). 3 disulfides stabilise this stretch: Cys-480-Cys-496, Cys-528-Cys-543, and Cys-570-Cys-590.

This sequence belongs to the glycosyltransferase 2 family. GalNAc-T subfamily. Mn(2+) serves as cofactor.

It is found in the golgi apparatus membrane. The catalysed reaction is L-seryl-[protein] + UDP-N-acetyl-alpha-D-galactosamine = a 3-O-[N-acetyl-alpha-D-galactosaminyl]-L-seryl-[protein] + UDP + H(+). It carries out the reaction L-threonyl-[protein] + UDP-N-acetyl-alpha-D-galactosamine = a 3-O-[N-acetyl-alpha-D-galactosaminyl]-L-threonyl-[protein] + UDP + H(+). The protein operates within protein modification; protein glycosylation. Functionally, catalyzes the initial reaction in O-linked oligosaccharide biosynthesis, the transfer of an N-acetyl-D-galactosamine residue to a serine or threonine residue on the protein receptor. Does not glycosylate apomucin or SDC3. The sequence is that of Polypeptide N-acetylgalactosaminyltransferase 9 (GALNT9) from Macaca fascicularis (Crab-eating macaque).